A 155-amino-acid polypeptide reads, in one-letter code: Pre-hexon-linking protein VIII (155 aa).

Positions 44 to 84 (GVHRTKDIKPEDLVGRGIQLNSYQPPTTRLKPERVFQLAGG) are excised as a propeptide.

Belongs to the adenoviridae hexon-linking protein family. As to quaternary structure, interacts with the peripentonal hexons as well as the hexons in the facets. Part of a complex composed of the core-capsid bridging protein, the endosome lysis protein VI and the hexon-linking protein VIII; these interactions bridge the virus core to the capsid. Cleaved by the viral protease during virion maturation. May cause the middle segment to be shed from the capsid.

The protein localises to the virion. The protein resides in the host nucleus. Functionally, structural component of the virion that acts as a cement protein on the capsid interior and which glue the peripentonal hexons and group-of-nine hexons together. The chain is Pre-hexon-linking protein VIII from Bos taurus (Bovine).